The following is a 188-amino-acid chain: Elongation factor P (188 aa).

The residue at position 34 (Lys-34) is an N6-(3,6-diaminohexanoyl)-5-hydroxylysine.

The protein belongs to the elongation factor P family. May be beta-lysylated on the epsilon-amino group of Lys-34 by the combined action of EpmA and EpmB, and then hydroxylated on the C5 position of the same residue by EpmC (if this protein is present). Lysylation is critical for the stimulatory effect of EF-P on peptide-bond formation. The lysylation moiety may extend toward the peptidyltransferase center and stabilize the terminal 3-CCA end of the tRNA. Hydroxylation of the C5 position on Lys-34 may allow additional potential stabilizing hydrogen-bond interactions with the P-tRNA.

It is found in the cytoplasm. It participates in protein biosynthesis; polypeptide chain elongation. Functionally, involved in peptide bond synthesis. Alleviates ribosome stalling that occurs when 3 or more consecutive Pro residues or the sequence PPG is present in a protein, possibly by augmenting the peptidyl transferase activity of the ribosome. Modification of Lys-34 is required for alleviation. The polypeptide is Elongation factor P (Citrobacter koseri (strain ATCC BAA-895 / CDC 4225-83 / SGSC4696)).